The chain runs to 225 residues: UPF0173 metal-dependent hydrolase PYRAB05000 (225 aa).

The protein belongs to the UPF0173 family.

The chain is UPF0173 metal-dependent hydrolase PYRAB05000 from Pyrococcus abyssi (strain GE5 / Orsay).